We begin with the raw amino-acid sequence, 298 residues long: Heat stress transcription factor C-2a (298 aa).

Positions 105–128 (SSGGGGAKRKEEAGGCGGGGEAAA) are disordered. The segment at 145-181 (LRREQREIEGRVAAMWRRVQETERRPKQMLAFLVKVV) is hydrophobic repeat HR-A/B. The Nuclear localization signal signature appears at 213-216 (KRPR).

The protein belongs to the HSF family. Class C subfamily. Homotrimer. In terms of processing, exhibits temperature-dependent phosphorylation.

Its subcellular location is the nucleus. Functionally, transcriptional regulator that specifically binds DNA of heat shock promoter elements (HSE). The protein is Heat stress transcription factor C-2a (HSFC2A) of Oryza sativa subsp. japonica (Rice).